The following is a 147-amino-acid chain: Large ribosomal subunit protein uL15 (147 aa).

A compositionally biased stretch (basic residues) spans 1–28 (MIRRRKKVRKLRGSHTHGWGCKKKHRGG). Residues 1–43 (MIRRRKKVRKLRGSHTHGWGCKKKHRGGGSKGGRGMAGTGKRN) form a disordered region. A compositionally biased stretch (gly residues) spans 29-38 (GSKGGRGMAG).

The protein belongs to the universal ribosomal protein uL15 family. As to quaternary structure, part of the 50S ribosomal subunit.

Binds to the 23S rRNA. This chain is Large ribosomal subunit protein uL15, found in Pyrococcus abyssi (strain GE5 / Orsay).